The sequence spans 341 residues: B3 domain-containing transcription factor VRN1 (341 aa).

Residues 5–98 (FFHKLIFSST…AFSVYIFNLS (94 aa)) constitute a DNA-binding region (TF-B3 1). The tract at residues 166 to 223 (GPVKAEEPTPTPKIPKKRGRKKKNADPEEINSSAPRDDDPENRSKFYESASARKRTVT) is disordered. Positions 179–188 (IPKKRGRKKK) are enriched in basic residues. Positions 200-211 (PRDDDPENRSKF) are enriched in basic and acidic residues. The TF-B3 2 DNA-binding region spans 244 to 338 (FRVVLRPSYL…VLKVTAFRVN (95 aa)).

As to expression, expressed in roots and at lower levels in aerial parts.

It is found in the nucleus. Essential protein. Involved in the regulation of vernalization. Acts as a transcriptional repressor of FLC, a major target of the vernalization pathway. Binds DNA in vitro in a non-sequence-specific manner. In Arabidopsis thaliana (Mouse-ear cress), this protein is B3 domain-containing transcription factor VRN1.